A 391-amino-acid chain; its full sequence is Histidinol-phosphate aminotransferase (391 aa).

The residue at position 248 (Lys-248) is an N6-(pyridoxal phosphate)lysine.

It belongs to the class-II pyridoxal-phosphate-dependent aminotransferase family. Histidinol-phosphate aminotransferase subfamily. As to quaternary structure, homodimer. Pyridoxal 5'-phosphate serves as cofactor.

It catalyses the reaction L-histidinol phosphate + 2-oxoglutarate = 3-(imidazol-4-yl)-2-oxopropyl phosphate + L-glutamate. The protein operates within amino-acid biosynthesis; L-histidine biosynthesis; L-histidine from 5-phospho-alpha-D-ribose 1-diphosphate: step 7/9. This Shewanella oneidensis (strain ATCC 700550 / JCM 31522 / CIP 106686 / LMG 19005 / NCIMB 14063 / MR-1) protein is Histidinol-phosphate aminotransferase.